A 93-amino-acid polypeptide reads, in one-letter code: uncharacterized protein (93 aa).

This is an uncharacterized protein from Homo sapiens (Human).